The chain runs to 717 residues: Polyribonucleotide nucleotidyltransferase (717 aa).

2 residues coordinate Mg(2+): Asp-486 and Asp-492. One can recognise a KH domain in the interval Pro-553 to Ile-612. The region spanning Gly-622–Lys-690 is the S1 motif domain. The segment at Lys-690–Gln-717 is disordered.

It belongs to the polyribonucleotide nucleotidyltransferase family. Mg(2+) is required as a cofactor.

It is found in the cytoplasm. The enzyme catalyses RNA(n+1) + phosphate = RNA(n) + a ribonucleoside 5'-diphosphate. Functionally, involved in mRNA degradation. Catalyzes the phosphorolysis of single-stranded polyribonucleotides processively in the 3'- to 5'-direction. The sequence is that of Polyribonucleotide nucleotidyltransferase from Ralstonia nicotianae (strain ATCC BAA-1114 / GMI1000) (Ralstonia solanacearum).